The sequence spans 239 residues: Orotidine 5'-phosphate decarboxylase (239 aa).

Residues Asp11, Lys33, 60–69, Thr123, Arg185, Gln194, Gly214, and Arg215 contribute to the substrate site; that span reads DLKCHDIPTT. Residue Lys62 is the Proton donor of the active site.

The protein belongs to the OMP decarboxylase family. Type 1 subfamily. Homodimer.

It catalyses the reaction orotidine 5'-phosphate + H(+) = UMP + CO2. It participates in pyrimidine metabolism; UMP biosynthesis via de novo pathway; UMP from orotate: step 2/2. Catalyzes the decarboxylation of orotidine 5'-monophosphate (OMP) to uridine 5'-monophosphate (UMP). The polypeptide is Orotidine 5'-phosphate decarboxylase (Bacillus licheniformis (strain ATCC 14580 / DSM 13 / JCM 2505 / CCUG 7422 / NBRC 12200 / NCIMB 9375 / NCTC 10341 / NRRL NRS-1264 / Gibson 46)).